Consider the following 201-residue polypeptide: Orotate phosphoribosyltransferase (201 aa).

Residue 113 to 121 coordinates 5-phospho-alpha-D-ribose 1-diphosphate; that stretch reads EDIITTGKS. The orotate site is built by threonine 117 and arginine 145.

The protein belongs to the purine/pyrimidine phosphoribosyltransferase family. PyrE subfamily. Homodimer. Mg(2+) is required as a cofactor.

The enzyme catalyses orotidine 5'-phosphate + diphosphate = orotate + 5-phospho-alpha-D-ribose 1-diphosphate. Its pathway is pyrimidine metabolism; UMP biosynthesis via de novo pathway; UMP from orotate: step 1/2. Catalyzes the transfer of a ribosyl phosphate group from 5-phosphoribose 1-diphosphate to orotate, leading to the formation of orotidine monophosphate (OMP). The protein is Orotate phosphoribosyltransferase of Helicobacter pylori (strain HPAG1).